Here is a 210-residue protein sequence, read N- to C-terminus: Large ribosomal subunit protein uL4 (210 aa).

Over residues 41–52 (QTNARQGTASTK) the composition is skewed to polar residues. The segment at 41-71 (QTNARQGTASTKTRAEVRGGGRKPWRQKGTG) is disordered. Residues 60–71 (GGRKPWRQKGTG) are compositionally biased toward basic residues.

The protein belongs to the universal ribosomal protein uL4 family. As to quaternary structure, part of the 50S ribosomal subunit.

One of the primary rRNA binding proteins, this protein initially binds near the 5'-end of the 23S rRNA. It is important during the early stages of 50S assembly. It makes multiple contacts with different domains of the 23S rRNA in the assembled 50S subunit and ribosome. Its function is as follows. Forms part of the polypeptide exit tunnel. This chain is Large ribosomal subunit protein uL4, found in Trichormus variabilis (strain ATCC 29413 / PCC 7937) (Anabaena variabilis).